The primary structure comprises 615 residues: 1-deoxy-D-xylulose-5-phosphate synthase (615 aa).

Residues histidine 76 and 117 to 119 (GHS) contribute to the thiamine diphosphate site. Aspartate 148 contacts Mg(2+). Thiamine diphosphate contacts are provided by residues 149 to 150 (GA), asparagine 177, tyrosine 284, and glutamate 365. Asparagine 177 serves as a coordination point for Mg(2+).

This sequence belongs to the transketolase family. DXPS subfamily. As to quaternary structure, homodimer. Mg(2+) serves as cofactor. Thiamine diphosphate is required as a cofactor.

The enzyme catalyses D-glyceraldehyde 3-phosphate + pyruvate + H(+) = 1-deoxy-D-xylulose 5-phosphate + CO2. It participates in metabolic intermediate biosynthesis; 1-deoxy-D-xylulose 5-phosphate biosynthesis; 1-deoxy-D-xylulose 5-phosphate from D-glyceraldehyde 3-phosphate and pyruvate: step 1/1. Its function is as follows. Catalyzes the acyloin condensation reaction between C atoms 2 and 3 of pyruvate and glyceraldehyde 3-phosphate to yield 1-deoxy-D-xylulose-5-phosphate (DXP). The protein is 1-deoxy-D-xylulose-5-phosphate synthase of Francisella tularensis subsp. mediasiatica (strain FSC147).